A 265-amino-acid chain; its full sequence is Pancreas transcription factor 1 subunit alpha (265 aa).

The bHLH domain occupies 115–167 (QLRQAANVRERRRMQSINDAFEGLRSHIPTLPYEKRLSKVDTLRLAIGYINFL).

The protein resides in the nucleus. Functionally, transcription factor implicated in the cell fate determination in various organs. Binds to the E-box consensus sequence 5'-CANNTG-3'. Required for exocrine pancreatic development. Plays a central role in directing the differentiation of retinal progenitors towards horizontal and amacrine fates. The sequence is that of Pancreas transcription factor 1 subunit alpha (ptf1a) from Danio rerio (Zebrafish).